The sequence spans 214 residues: MSDFRQDFIRFALDKQVLKFGEFITKAGRKSPYFFNAGLFNDGLSTLNLSRFYAKSIQQSGIQFDMLFGPAYKGIILAAAAGMALAEQGRNVPFAYNRKEAKDHGEGGTLVGAPLKGKVLIIDDVISAGTSVRESVELIRAAGAEPAGVAIALDRMERGQGELSAVQEVAQQHGLPVVAIATLKDLLGFLENSPELAAHLDAVRAYRAQYGVDD.

K26 provides a ligand contact to 5-phospho-alpha-D-ribose 1-diphosphate. 34-35 (FF) lines the orotate pocket. Residues 72-73 (YK), R98, K99, K102, H104, and 123-131 (DDVISAGTS) contribute to the 5-phospho-alpha-D-ribose 1-diphosphate site. Orotate is bound by residues S127 and R155.

The protein belongs to the purine/pyrimidine phosphoribosyltransferase family. PyrE subfamily. As to quaternary structure, homodimer. The cofactor is Mg(2+).

The enzyme catalyses orotidine 5'-phosphate + diphosphate = orotate + 5-phospho-alpha-D-ribose 1-diphosphate. It participates in pyrimidine metabolism; UMP biosynthesis via de novo pathway; UMP from orotate: step 1/2. Its function is as follows. Catalyzes the transfer of a ribosyl phosphate group from 5-phosphoribose 1-diphosphate to orotate, leading to the formation of orotidine monophosphate (OMP). This Chromobacterium violaceum (strain ATCC 12472 / DSM 30191 / JCM 1249 / CCUG 213 / NBRC 12614 / NCIMB 9131 / NCTC 9757 / MK) protein is Orotate phosphoribosyltransferase.